The following is a 428-amino-acid chain: Glutamate-1-semialdehyde 2,1-aminomutase 1 (428 aa).

Lys268 carries the N6-(pyridoxal phosphate)lysine modification.

It belongs to the class-III pyridoxal-phosphate-dependent aminotransferase family. HemL subfamily. Homodimer. Requires pyridoxal 5'-phosphate as cofactor.

Its subcellular location is the cytoplasm. The catalysed reaction is (S)-4-amino-5-oxopentanoate = 5-aminolevulinate. The protein operates within porphyrin-containing compound metabolism; protoporphyrin-IX biosynthesis; 5-aminolevulinate from L-glutamyl-tRNA(Glu): step 2/2. The sequence is that of Glutamate-1-semialdehyde 2,1-aminomutase 1 from Geobacillus thermodenitrificans (strain NG80-2).